Reading from the N-terminus, the 414-residue chain is Ankyrin repeat domain-containing protein 10 (414 aa).

ANK repeat units follow at residues 18–47 (TLRFPLHRACRDGDLPALCALLQSAPRSDL), 54–83 (YGWTPIHWAAHFGKLECLMQLVRAGASVNA), 88–117 (FAQTPAHIAAFGGHPQCLNWLIQVGANINK), 121–150 (VGETPIHKAARSGSVDSISALVAHGAQIDL), and 154–187 (SGLTAADLAHTQGFQECAQFLLNLQNCHLNRYYS). The tract at residues 310-332 (GVTSPSRHRIHTSNGTEEPEKAM) is disordered.

This chain is Ankyrin repeat domain-containing protein 10 (ANKRD10), found in Gallus gallus (Chicken).